The primary structure comprises 272 residues: Centromere protein V-like protein 3 (272 aa).

Over residues 1–17 the composition is skewed to basic residues; the sequence is MGRVRNRATAQRRRRKR. Disordered stretches follow at residues 1-23 and 65-95; these read MGRVRNRATAQRRRRKRPGDPPA and RRAREAGSRDPLPSAPLPDPPAPAESPKELD. A compositionally biased stretch (pro residues) spans 77–88; that stretch reads PSAPLPDPPAPA. Residues 133–246 enclose the CENP-V/GFA domain; that stretch reads HTGGCHCGAV…EEVGGGDPGE (114 aa). Zn(2+) contacts are provided by Cys-137, Cys-139, Cys-157, Cys-159, Cys-162, Cys-201, and Cys-204. The segment at 240–272 is disordered; the sequence is GGGDPGEEAAEEHKAIHKTSSQSAPACPREQEQ.

The protein belongs to the Gfa family. Zn(2+) is required as a cofactor.

The protein is Centromere protein V-like protein 3 of Homo sapiens (Human).